The chain runs to 222 residues: Putative N-acetylmannosamine-6-phosphate 2-epimerase (222 aa).

It belongs to the NanE family.

The enzyme catalyses an N-acyl-D-glucosamine 6-phosphate = an N-acyl-D-mannosamine 6-phosphate. The protein operates within amino-sugar metabolism; N-acetylneuraminate degradation; D-fructose 6-phosphate from N-acetylneuraminate: step 3/5. Converts N-acetylmannosamine-6-phosphate (ManNAc-6-P) to N-acetylglucosamine-6-phosphate (GlcNAc-6-P). The protein is Putative N-acetylmannosamine-6-phosphate 2-epimerase of Staphylococcus aureus (strain MSSA476).